The chain runs to 304 residues: Type II restriction enzyme LlaDCHI (304 aa).

It belongs to the DpnII type II restriction endonuclease family.

The enzyme catalyses Endonucleolytic cleavage of DNA to give specific double-stranded fragments with terminal 5'-phosphates.. Its function is as follows. A P subtype restriction enzyme that recognizes the double-stranded unmethylated sequence 5'-GATC-3' and cleaves before G-1. The chain is Type II restriction enzyme LlaDCHI (llaDCHIR) from Lactococcus lactis subsp. cremoris (Streptococcus cremoris).